The following is a 144-amino-acid chain: Sec-independent protein translocase protein TatB (144 aa).

The helical transmembrane segment at 1–21 (MFEIGFWELVLVAIIGIVVVG) threads the bilayer. The segment at 97-144 (KMIDEPPYQEPPPAAHSVQTDAEAYRDTGIEPADKSSSPEHHHDDAAR) is disordered. The span at 119–144 (EAYRDTGIEPADKSSSPEHHHDDAAR) shows a compositional bias: basic and acidic residues.

Belongs to the TatB family. The Tat system comprises two distinct complexes: a TatABC complex, containing multiple copies of TatA, TatB and TatC subunits, and a separate TatA complex, containing only TatA subunits. Substrates initially bind to the TatABC complex, which probably triggers association of the separate TatA complex to form the active translocon.

It is found in the cell inner membrane. In terms of biological role, part of the twin-arginine translocation (Tat) system that transports large folded proteins containing a characteristic twin-arginine motif in their signal peptide across membranes. Together with TatC, TatB is part of a receptor directly interacting with Tat signal peptides. TatB may form an oligomeric binding site that transiently accommodates folded Tat precursor proteins before their translocation. This is Sec-independent protein translocase protein TatB from Dichelobacter nodosus (strain VCS1703A).